Reading from the N-terminus, the 286-residue chain is 33 kDa chaperonin (286 aa).

Intrachain disulfides connect cysteine 225-cysteine 227 and cysteine 258-cysteine 261.

It belongs to the HSP33 family. In terms of processing, under oxidizing conditions two disulfide bonds are formed involving the reactive cysteines. Under reducing conditions zinc is bound to the reactive cysteines and the protein is inactive.

The protein resides in the cytoplasm. Functionally, redox regulated molecular chaperone. Protects both thermally unfolding and oxidatively damaged proteins from irreversible aggregation. Plays an important role in the bacterial defense system toward oxidative stress. The chain is 33 kDa chaperonin from Shewanella sp. (strain ANA-3).